Here is a 258-residue protein sequence, read N- to C-terminus: Snake venom serine protease KN12 (258 aa).

A signal peptide spans Met1 to Ala18. Positions Gln19 to Leu24 are excised as a propeptide. Residues Val25 to Ala249 enclose the Peptidase S1 domain. Cystine bridges form between Cys31/Cys163, Cys50/Cys66, Cys98/Cys256, Cys142/Cys210, Cys174/Cys189, and Cys200/Cys225. Residue His65 is the Charge relay system of the active site. N-linked (GlcNAc...) asparagine glycosylation occurs at Asn103. Asp110 serves as the catalytic Charge relay system. N-linked (GlcNAc...) asparagine glycosylation is found at Asn121, Asn122, Asn154, and Asn170. Ser204 serves as the catalytic Charge relay system. Asn251 carries N-linked (GlcNAc...) asparagine glycosylation.

Belongs to the peptidase S1 family. Snake venom subfamily. Monomer. As to expression, expressed by the venom gland.

The protein localises to the secreted. Functionally, snake venom serine protease that may act in the hemostasis system of the prey. This chain is Snake venom serine protease KN12, found in Trimeresurus stejnegeri (Chinese green tree viper).